The chain runs to 424 residues: MIVSEVNFDGLIGPTHNYAGLSRGNVASALHAGQPSYPRQAALQGLEKMKHLMDMGLTQGVFLPPLRPVTHLLHHLGYKGDDKTILKQAAKDDRLLFNNLCSASSMWAANAATVISEFDSHDGRVHFITANLATMLHRHLEAQTTYAQLNQIFSNSCFFAMHHPLPCGQHFSDEGAANHMRITSAHGRTGINIFVYGEKNDIYPARQKLRASQAVARLGEVKPDLAWFIPQKKEAIAKGAFHNDVVAVANEYVLLAHAEAFEDQGEWIKRIAEKIDGFIPIIIDNITLEQAVKSYLFNSQIVTLKDRTMALILPQEVKSDPAVWETVNRIISGNNPIKKAVVVDVRESMANGGGPACLRLRVPLSKAALEAVDQRFILTPKRWEKLYQLVENFWPEKITPDDLVLPELWKTAVRAHWALTSWLG.

Substrate-binding positions include 19-28 (AGLSRGNVAS), Asn110, and 137-138 (HR). The active site involves Glu174. Residue Arg206 coordinates substrate. His242 is a catalytic residue. Substrate-binding residues include Asp244 and Asn351. The Nucleophile role is filled by Cys357.

It belongs to the succinylarginine dihydrolase family. In terms of assembly, homodimer.

It carries out the reaction N(2)-succinyl-L-arginine + 2 H2O + 2 H(+) = N(2)-succinyl-L-ornithine + 2 NH4(+) + CO2. The protein operates within amino-acid degradation; L-arginine degradation via AST pathway; L-glutamate and succinate from L-arginine: step 2/5. Catalyzes the hydrolysis of N(2)-succinylarginine into N(2)-succinylornithine, ammonia and CO(2). This Zymomonas mobilis subsp. mobilis (strain ATCC 31821 / ZM4 / CP4) protein is N-succinylarginine dihydrolase.